Consider the following 121-residue polypeptide: Ribosome-binding factor A (121 aa).

The protein belongs to the RbfA family. In terms of assembly, monomer. Binds 30S ribosomal subunits, but not 50S ribosomal subunits or 70S ribosomes.

The protein localises to the cytoplasm. Its function is as follows. One of several proteins that assist in the late maturation steps of the functional core of the 30S ribosomal subunit. Associates with free 30S ribosomal subunits (but not with 30S subunits that are part of 70S ribosomes or polysomes). Required for efficient processing of 16S rRNA. May interact with the 5'-terminal helix region of 16S rRNA. The sequence is that of Ribosome-binding factor A from Clostridium tetani (strain Massachusetts / E88).